The chain runs to 76 residues: ATP synthase subunit 9, mitochondrial (76 aa).

2 consecutive transmembrane segments (helical) span residues Ile-14–Ile-34 and Ile-52–Leu-72.

This sequence belongs to the ATPase C chain family. As to quaternary structure, F-type ATPases have 2 components, CF(1) - the catalytic core - and CF(0) - the membrane proton channel. CF(1) has five subunits: alpha(3), beta(3), gamma(1), delta(1), epsilon(1). CF(0) has three main subunits: a, b and c.

It is found in the mitochondrion membrane. Functionally, mitochondrial membrane ATP synthase (F(1)F(0) ATP synthase or Complex V) produces ATP from ADP in the presence of a proton gradient across the membrane which is generated by electron transport complexes of the respiratory chain. F-type ATPases consist of two structural domains, F(1) - containing the extramembraneous catalytic core and F(0) - containing the membrane proton channel, linked together by a central stalk and a peripheral stalk. During catalysis, ATP synthesis in the catalytic domain of F(1) is coupled via a rotary mechanism of the central stalk subunits to proton translocation. Part of the complex F(0) domain. A homomeric c-ring of probably 10 subunits is part of the complex rotary element. This Candida albicans (strain SC5314 / ATCC MYA-2876) (Yeast) protein is ATP synthase subunit 9, mitochondrial (ATP9).